Reading from the N-terminus, the 60-residue chain is ETESTPDYLKNIQQQLEEYTKNFNTQVQNAFDSDKIKSEVNNFIESLGKILNTEKKEAPK.

In terms of tissue distribution, hemolymph.

The protein resides in the secreted. Antimicrobial protein. Has antibacterial activity against the Gram-positive bacteria M.luteus (MIC=86.6 uM), L.monocytogenes (MIC=86.6 uM), and S.lutea (MIC=86.6 uM). Lacks antibacterial activity against the Gram-positive bacteria B.circulans and S.aureus, and the Gram-negative bacteria E.coli D31, E.coli ATCC 25922, and S.typhimurium. Has antifungal activity against P.pastoris (MIC=86.6 uM) and P.stipitis (MIC=90.9 uM), but lacks antifungal activity against A.niger, C.albicans, C.albidus, C.fructus, C.wickerhamii, F.oxysporum, S.cerevisiae, S.pombe, T.harzianum, and Z.marxianus. The sequence is that of Anionic antimicrobial peptide 2 from Galleria mellonella (Greater wax moth).